Consider the following 212-residue polypeptide: Octanoyltransferase (212 aa).

The 179-residue stretch at 31-209 folds into the BPL/LPL catalytic domain; sequence AETQDEIWLV…HFADLLGYNI (179 aa). Substrate contacts are provided by residues 70–77, 138–140, and 151–153; these read RGGQITYH, SLG, and GLA. The active-site Acyl-thioester intermediate is Cys169.

Belongs to the LipB family.

Its subcellular location is the cytoplasm. The enzyme catalyses octanoyl-[ACP] + L-lysyl-[protein] = N(6)-octanoyl-L-lysyl-[protein] + holo-[ACP] + H(+). It participates in protein modification; protein lipoylation via endogenous pathway; protein N(6)-(lipoyl)lysine from octanoyl-[acyl-carrier-protein]: step 1/2. In terms of biological role, catalyzes the transfer of endogenously produced octanoic acid from octanoyl-acyl-carrier-protein onto the lipoyl domains of lipoate-dependent enzymes. Lipoyl-ACP can also act as a substrate although octanoyl-ACP is likely to be the physiological substrate. This is Octanoyltransferase from Haemophilus influenzae (strain PittGG).